We begin with the raw amino-acid sequence, 412 residues long: Acetylornithine aminotransferase (412 aa).

Pyridoxal 5'-phosphate contacts are provided by residues 109 to 110 (GA) and F142. A N(2)-acetyl-L-ornithine-binding site is contributed by R145. 233 to 236 (DEVQ) contributes to the pyridoxal 5'-phosphate binding site. K262 is modified (N6-(pyridoxal phosphate)lysine). Position 289 (S289) interacts with N(2)-acetyl-L-ornithine. Residue T290 coordinates pyridoxal 5'-phosphate.

It belongs to the class-III pyridoxal-phosphate-dependent aminotransferase family. ArgD subfamily. Homodimer. Requires pyridoxal 5'-phosphate as cofactor.

The protein localises to the cytoplasm. It catalyses the reaction N(2)-acetyl-L-ornithine + 2-oxoglutarate = N-acetyl-L-glutamate 5-semialdehyde + L-glutamate. The protein operates within amino-acid biosynthesis; L-arginine biosynthesis; N(2)-acetyl-L-ornithine from L-glutamate: step 4/4. The polypeptide is Acetylornithine aminotransferase (Thermosynechococcus vestitus (strain NIES-2133 / IAM M-273 / BP-1)).